The following is a 215-amino-acid chain: 3-demethoxyubiquinol 3-hydroxylase (215 aa).

The Fe cation site is built by Glu64, Glu94, His97, Glu146, Glu178, and His181.

This sequence belongs to the COQ7 family. Requires Fe cation as cofactor.

The protein resides in the cell membrane. It carries out the reaction a 5-methoxy-2-methyl-3-(all-trans-polyprenyl)benzene-1,4-diol + AH2 + O2 = a 3-demethylubiquinol + A + H2O. Its pathway is cofactor biosynthesis; ubiquinone biosynthesis. Its function is as follows. Catalyzes the hydroxylation of 2-nonaprenyl-3-methyl-6-methoxy-1,4-benzoquinol during ubiquinone biosynthesis. This is 3-demethoxyubiquinol 3-hydroxylase from Coxiella burnetii (strain RSA 331 / Henzerling II).